The chain runs to 181 residues: MSEENIGENEVETPETEPSAEAEVESPFAKLEGELEKLRNEVLYAQAETQNVRRRLEKEKADASAYAATGFARDMLSVADNLGRALAAIPAELREDDRIGSLLTGIEMTAKELENVFQRNGISKIEALGAKLDPNRHQAMVELPSADAEPGTVIQEMQAGYMIKDRLLRPALVGVAKTPEA.

Residues 1–24 (MSEENIGENEVETPETEPSAEAEV) are compositionally biased toward acidic residues. A disordered region spans residues 1 to 26 (MSEENIGENEVETPETEPSAEAEVES).

This sequence belongs to the GrpE family. Homodimer.

It is found in the cytoplasm. In terms of biological role, participates actively in the response to hyperosmotic and heat shock by preventing the aggregation of stress-denatured proteins, in association with DnaK and GrpE. It is the nucleotide exchange factor for DnaK and may function as a thermosensor. Unfolded proteins bind initially to DnaJ; upon interaction with the DnaJ-bound protein, DnaK hydrolyzes its bound ATP, resulting in the formation of a stable complex. GrpE releases ADP from DnaK; ATP binding to DnaK triggers the release of the substrate protein, thus completing the reaction cycle. Several rounds of ATP-dependent interactions between DnaJ, DnaK and GrpE are required for fully efficient folding. The protein is Protein GrpE of Rhizorhabdus wittichii (strain DSM 6014 / CCUG 31198 / JCM 15750 / NBRC 105917 / EY 4224 / RW1) (Sphingomonas wittichii).